A 521-amino-acid chain; its full sequence is Signal recognition particle protein (521 aa).

Residues 107 to 114 (GLQGSGKT), 196 to 200 (DTAGR), and 254 to 257 (TKLD) each bind GTP. The interval 436 to 505 (GGMGIPGMGR…MPDGLNELPP (70 aa)) is disordered. Positions 447-462 (SATRKSKGGKGKKRAR) are enriched in basic residues.

The protein belongs to the GTP-binding SRP family. SRP54 subfamily. As to quaternary structure, part of the signal recognition particle protein translocation system, which is composed of SRP and FtsY.

The protein resides in the cytoplasm. The enzyme catalyses GTP + H2O = GDP + phosphate + H(+). Involved in targeting and insertion of nascent membrane proteins into the cytoplasmic membrane. Binds to the hydrophobic signal sequence of the ribosome-nascent chain (RNC) as it emerges from the ribosomes. The SRP-RNC complex is then targeted to the cytoplasmic membrane where it interacts with the SRP receptor FtsY. This Mycobacterium leprae (strain TN) protein is Signal recognition particle protein.